A 195-amino-acid chain; its full sequence is Thymidylate kinase (195 aa).

Residue Gly-7 to Ser-14 coordinates ATP.

It belongs to the thymidylate kinase family.

It carries out the reaction dTMP + ATP = dTDP + ADP. Its function is as follows. Phosphorylation of dTMP to form dTDP in both de novo and salvage pathways of dTTP synthesis. The protein is Thymidylate kinase of Helicobacter hepaticus (strain ATCC 51449 / 3B1).